The chain runs to 236 residues: 2-C-methyl-D-erythritol 4-phosphate cytidylyltransferase (236 aa).

It belongs to the IspD/TarI cytidylyltransferase family. IspD subfamily. In terms of assembly, homodimer.

The enzyme catalyses 2-C-methyl-D-erythritol 4-phosphate + CTP + H(+) = 4-CDP-2-C-methyl-D-erythritol + diphosphate. It functions in the pathway isoprenoid biosynthesis; isopentenyl diphosphate biosynthesis via DXP pathway; isopentenyl diphosphate from 1-deoxy-D-xylulose 5-phosphate: step 2/6. Functionally, catalyzes the formation of 4-diphosphocytidyl-2-C-methyl-D-erythritol from CTP and 2-C-methyl-D-erythritol 4-phosphate (MEP). This is 2-C-methyl-D-erythritol 4-phosphate cytidylyltransferase from Escherichia coli O127:H6 (strain E2348/69 / EPEC).